Consider the following 249-residue polypeptide: Probable phosphatase VV2_1469 (249 aa).

Zn(2+)-binding residues include His8, His10, His16, His41, Glu74, His102, His132, Asp194, and His196.

The protein belongs to the PHP family. Requires Zn(2+) as cofactor.

In Vibrio vulnificus (strain CMCP6), this protein is Probable phosphatase VV2_1469.